Reading from the N-terminus, the 532-residue chain is Purple acid phosphatase 15 (532 aa).

A signal peptide spans 1-19; sequence MTFLLLLLFCFLSPAISSA. An N-linked (GlcNAc...) asparagine glycan is attached at N136. D194 lines the Fe cation pocket. Residue N200 is glycosylated (N-linked (GlcNAc...) asparagine). D221 and Y224 together coordinate Fe cation. Position 221 (D221) interacts with Zn(2+). Residues N231 and N264 are each glycosylated (N-linked (GlcNAc...) asparagine). N277 is a Zn(2+) binding site. N277 provides a ligand contact to substrate. Residues N286 and N301 are each glycosylated (N-linked (GlcNAc...) asparagine). H359 is a binding site for Zn(2+). Residue H369 is the Proton donor of the active site. Position 396 (H396) interacts with Zn(2+). 396–398 is a binding site for substrate; that stretch reads HVH. H398 lines the Fe cation pocket. The N-linked (GlcNAc...) asparagine glycan is linked to N491.

It belongs to the metallophosphoesterase superfamily. Purple acid phosphatase family. In terms of assembly, homodimer. Fe cation serves as cofactor. It depends on Zn(2+) as a cofactor. Expressed in roots, stems, cotyledons, leaves, flowers and siliques.

It is found in the secreted. It catalyses the reaction 1D-myo-inositol hexakisphosphate + H2O = 1D-myo-inositol 1,2,3,5,6-pentakisphosphate + phosphate. It carries out the reaction a phosphate monoester + H2O = an alcohol + phosphate. Functionally, acid phosphatase activity with p-nitrophenyl phosphate (pNPP), D-myoinositol 1-phosphate (Ins(1)P1), phytic acid and Myo-inositol hexakisphosphate. Low or no activity with Glc-6-P and ATP. Confers shoot growth stimulation, enhanced salt and osmotic stress tolerance, and ABA insensitivity. May modulate ascorbic acid (AsA) levels by controlling the input of myoinositol into this branch of AsA biosynthesis. The chain is Purple acid phosphatase 15 (PAP15) from Arabidopsis thaliana (Mouse-ear cress).